We begin with the raw amino-acid sequence, 180 residues long: uncharacterized protein (180 aa).

The stretch at 3–33 forms a coiled coil; sequence QQQSNNSNDNKEQLDRVIESLNRVNSETKQI.

This is an uncharacterized protein from Acanthamoeba polyphaga (Amoeba).